The sequence spans 663 residues: Fructose-1,6-bisphosphatase class 3 1 (663 aa).

This sequence belongs to the FBPase class 3 family. Mn(2+) is required as a cofactor.

It catalyses the reaction beta-D-fructose 1,6-bisphosphate + H2O = beta-D-fructose 6-phosphate + phosphate. The protein operates within carbohydrate biosynthesis; gluconeogenesis. This is Fructose-1,6-bisphosphatase class 3 1 from Clostridium beijerinckii (strain ATCC 51743 / NCIMB 8052) (Clostridium acetobutylicum).